Reading from the N-terminus, the 242-residue chain is Interleukin-34 (242 aa).

Residues 1-20 (MPRGFTWLRYLGIFLGVALG) form the signal peptide. An N-linked (GlcNAc...) asparagine glycan is attached at asparagine 76. The tract at residues 210-242 (TQLYPPPPWSPSSPPHSTGSVRPVRAQGEGLLP) is disordered. Positions 213-223 (YPPPPWSPSSP) are enriched in pro residues.

Belongs to the IL-34 family. In terms of assembly, homodimer. Interacts with CSF1R. Detected in the sinusoidal epithelium in the red pulp of spleen (at protein level). Predominantly expressed in spleen. Also detected in a range of other tissues including heart, brain, lung, liver, kidney, thymus, testis, ovary, small intestine, prostate and colon.

Its subcellular location is the secreted. Its function is as follows. Cytokine that promotes the proliferation, survival and differentiation of monocytes and macrophages. Promotes the release of pro-inflammatory chemokines, and thereby plays an important role in innate immunity and in inflammatory processes. Plays an important role in the regulation of osteoclast proliferation and differentiation, and in the regulation of bone resorption. Signaling via CSF1R and its downstream effectors stimulates phosphorylation of MAPK1/ERK2 AND MAPK3/ERK1. The protein is Interleukin-34 (IL34) of Homo sapiens (Human).